The chain runs to 722 residues: MEKNGNNRKLRVCVATCNRADYSKLAPIMFGIKTEPAFFELDVVVLGSHLIDDYGNTYRMIEQDDFDINTRLHTIVRGEDEAAMVESVGLALVKLPDVLNRLKPDIMIVHGDRFDALALATSAALMNIRILHIEGGEVSGTIDDSIRHAITKLAHYHVCCTRSAEQHLISMCEDHDRILLAGCPSYDKLLSAKNKDYMSIIRMWLGDDVKCKDYIVALQHPVTTDIKHSIKMFELTLDALISFNKRTLVLFPNIDAGSKEMVRVMRKKGIEHHPNFRAVKHVPFDQFIQLVAHAGCMIGNSSCGVREVGAFGTPVINLGTRQIGRETGENVLHVRDADTQDKILQALHLQFGKQYPCSKIYGDGNAVPRILKFLKSIDLQEPLQKKFCFPPVKENISQDIDHILETLSALAVDLGGTNLRVAIVSMKGEIVKKYTQFNPKTYEERISLILQMCVEAAAEAVKLNCRILGVGISTGGRVNPQEGIVLHSTKLIQEWNSVDLRTPLSDTLHLPVWVDNDGNCAAMAERKFGQGKGQENFVTLITGTGIGGGIIHQHELIHGSSFCAAELGHLVVSLDGPDCSCGSHGCIEAYASGMALQREAKKLHDEDLLLVEGMSVPKDEPVGALHLIQAAKLGNVKAQNILRTAGTALGLGVVNILHTMDPSLVILSGVLASHYIHIVKDVIRQQASSSVQDVDVVVSDLVDPALLGAASMVLDYTTRRIH.

Positions 19, 23, 113, 220, and 253 each coordinate UDP. CMP-N-acetyl-beta-neuraminate contacts are provided by Lys259, Glu271, Lys280, and His281. Residues Val282, Ser301, Ser302, Glu307, and Arg321 each contribute to the UDP site. The N-acetylmannosamine kinase stretch occupies residues 406–722 (TLSALAVDLG…VLDYTTRRIH (317 aa)). Mg(2+) is bound at residue Asp413. Gly416 contacts an N-acyl-D-mannosamine 6-phosphate. Residues Thr417, Asn418, and Arg420 each coordinate ADP. An N-acyl-D-mannosamine 6-phosphate-binding residues include Gly476, Arg477, Thr489, Asn516, Asp517, and Gly545. An N-acyl-D-mannosamine-binding residues include Gly476, Arg477, Thr489, Asn516, and Asp517. Residue Asp517 is part of the active site. An N-acyl-D-mannosamine contacts are provided by Glu566 and His569. An N-acyl-D-mannosamine 6-phosphate is bound at residue His569. Residues His569, Cys579, Cys581, and Cys586 each coordinate Zn(2+). Glu588 serves as a coordination point for an N-acyl-D-mannosamine 6-phosphate. Glu588 is an an N-acyl-D-mannosamine binding site.

In the N-terminal section; belongs to the UDP-N-acetylglucosamine 2-epimerase family. It in the C-terminal section; belongs to the ROK (NagC/XylR) family. In terms of assembly, homodimer. Homotetramer. Homohexamer. The hexameric form exhibits both enzyme activities, whereas the dimeric form only catalyzes the phosphorylation of N-acyl-D-mannosamine. Post-translationally, phosphorylated. Phosphorylation by PKC activates the UDP-N-acetylglucosamine 2-epimerase activity.

The protein resides in the cytoplasm. The protein localises to the cytosol. It carries out the reaction UDP-N-acetyl-alpha-D-glucosamine + H2O = aldehydo-N-acetyl-D-mannosamine + UDP + H(+). It catalyses the reaction an N-acyl-D-mannosamine + ATP = an N-acyl-D-mannosamine 6-phosphate + ADP + H(+). It participates in amino-sugar metabolism; N-acetylneuraminate biosynthesis. With respect to regulation, the UDP-N-acetylglucosamine 2-epimerase activity, in contrast to the N-acetylmannosamine kinase activity, exhibits allosteric regulation by cytidine monophosphate-N-acetylneuraminic acid (CMP-Neu5Ac), the end product of neuraminic acid biosynthesis. Moreover, the activity is contingent upon the oligomeric state of the enzyme. The monomeric form is inactive, while the dimeric form selectively catalyzes the phosphorylation of N-acetylmannosamine. The hexameric form, on the other hand, demonstrates full proficiency in both enzyme activities. Furthermore, the UDP-N-acetylglucosamine 2-epimerase activity is increased by PKC-mediated phosphorylation. Its function is as follows. Bifunctional enzyme that possesses both UDP-N-acetylglucosamine 2-epimerase and N-acetylmannosamine kinase activities, and serves as the initiator of the biosynthetic pathway leading to the production of N-acetylneuraminic acid (NeuAc), a critical precursor in the synthesis of sialic acids. By catalyzing this pivotal and rate-limiting step in sialic acid biosynthesis, this enzyme assumes a pivotal role in governing the regulation of cell surface sialylation, playing a role in embryonic angiogenesis. Sialic acids represent a category of negatively charged sugars that reside on the surface of cells as terminal components of glycoconjugates and mediate important functions in various cellular processes, including cell adhesion, signal transduction, and cellular recognition. The chain is Bifunctional UDP-N-acetylglucosamine 2-epimerase/N-acetylmannosamine kinase (GNE) from Cricetulus griseus (Chinese hamster).